A 341-amino-acid polypeptide reads, in one-letter code: Methionine import ATP-binding protein MetN (341 aa).

One can recognise an ABC transporter domain in the interval 6-247 (IEIKKLSKNF…PQHQATRHLL (242 aa)). 44–51 (GMSGAGKS) is a binding site for ATP.

This sequence belongs to the ABC transporter superfamily. Methionine importer (TC 3.A.1.24) family. In terms of assembly, the complex is composed of two ATP-binding proteins (MetN), two transmembrane proteins (MetI) and a solute-binding protein (MetQ).

The protein localises to the cell inner membrane. The catalysed reaction is L-methionine(out) + ATP + H2O = L-methionine(in) + ADP + phosphate + H(+). It carries out the reaction D-methionine(out) + ATP + H2O = D-methionine(in) + ADP + phosphate + H(+). In terms of biological role, part of the ABC transporter complex MetNIQ involved in methionine import. Responsible for energy coupling to the transport system. The protein is Methionine import ATP-binding protein MetN of Protochlamydia amoebophila (strain UWE25).